The chain runs to 337 residues: Nucleoid-associated protein HS_0228 (337 aa).

The protein belongs to the YejK family.

The protein resides in the cytoplasm. It localises to the nucleoid. The polypeptide is Nucleoid-associated protein HS_0228 (Histophilus somni (strain 129Pt) (Haemophilus somnus)).